Here is a 223-residue protein sequence, read N- to C-terminus: Ribose-5-phosphate isomerase A (223 aa).

Substrate is bound by residues 28-31 (TGST), 81-84 (DGAD), and 94-97 (KGGG). Residue Glu103 is the Proton acceptor of the active site. Lys121 provides a ligand contact to substrate.

This sequence belongs to the ribose 5-phosphate isomerase family. In terms of assembly, homodimer.

It carries out the reaction aldehydo-D-ribose 5-phosphate = D-ribulose 5-phosphate. It participates in carbohydrate degradation; pentose phosphate pathway; D-ribose 5-phosphate from D-ribulose 5-phosphate (non-oxidative stage): step 1/1. Catalyzes the reversible conversion of ribose-5-phosphate to ribulose 5-phosphate. In Herminiimonas arsenicoxydans, this protein is Ribose-5-phosphate isomerase A.